The primary structure comprises 540 residues: Kinesin light chain (540 aa).

Residues 34-138 (LETSVKGVKE…NKHLKYMASI (105 aa)) are a coiled coil. TPR repeat units lie at residues 206-239 (LRTL…LEKT), 248-281 (ATML…REKC), 290-323 (AATL…REKV), 332-365 (AKQL…YESK), 374-407 (AKTK…AHER), and 456-489 (TTTL…KKQH).

This sequence belongs to the kinesin light chain family. In terms of assembly, oligomeric complex composed of two heavy chains and two light chains. Interacts with unc-83; the interaction is direct. Interacts with unc-33; the interaction regulates unc-33 neurite localization. Interacts with casy-1.

It is found in the cytoplasm. Its subcellular location is the cytoskeleton. The protein resides in the nucleus envelope. Functionally, kinesin is a microtubule-associated force-producing protein that may play a role in organelle transport. The light chain may function in coupling of cargo to the heavy chain or in the modulation of its ATPase activity. Recruits unc-83 (within the unc-83-unc-84 LINC complex) to the nuclear envelope during nuclear migration to mediate the link between the nuclear envelope and the microtubule cytoskeleton in hypodermal precursor cells. In Caenorhabditis elegans, this protein is Kinesin light chain.